Reading from the N-terminus, the 206-residue chain is Guanylate kinase (206 aa).

A Guanylate kinase-like domain is found at Gly5–His183. Ala12–Ser19 serves as a coordination point for ATP.

It belongs to the guanylate kinase family.

The protein localises to the cytoplasm. It catalyses the reaction GMP + ATP = GDP + ADP. In terms of biological role, essential for recycling GMP and indirectly, cGMP. The polypeptide is Guanylate kinase (Polaromonas sp. (strain JS666 / ATCC BAA-500)).